The primary structure comprises 355 residues: dTDP-glucose 4,6-dehydratase (355 aa).

Residues phenylalanine 12 to isoleucine 13, aspartate 33 to threonine 36, aspartate 59 to isoleucine 60, leucine 81 to serine 85, and threonine 100 each bind NAD(+). Serine 85 contributes to the substrate binding site. Threonine 134 is a substrate binding site. Aspartate 135 functions as the Proton donor in the catalytic mechanism. Residues glutamate 136 and tyrosine 160 each act as proton acceptor in the active site. Tyrosine 160–lysine 164 contributes to the NAD(+) binding site. Position 189 (asparagine 189) interacts with substrate. Asparagine 190 is a binding site for NAD(+). Substrate contacts are provided by residues lysine 199–leucine 200, proline 215–tyrosine 217, arginine 224, asparagine 259, and aspartate 293–histidine 297.

It belongs to the NAD(P)-dependent epimerase/dehydratase family. dTDP-glucose dehydratase subfamily. In terms of assembly, homodimer. It depends on NAD(+) as a cofactor.

It carries out the reaction dTDP-alpha-D-glucose = dTDP-4-dehydro-6-deoxy-alpha-D-glucose + H2O. Its pathway is carbohydrate biosynthesis; dTDP-L-rhamnose biosynthesis. It functions in the pathway bacterial outer membrane biogenesis; LPS O-antigen biosynthesis. In terms of biological role, catalyzes the dehydration of dTDP-D-glucose to form dTDP-6-deoxy-D-xylo-4-hexulose via a three-step process involving oxidation, dehydration and reduction. This chain is dTDP-glucose 4,6-dehydratase (rfbB1), found in Neisseria meningitidis serogroup B (strain ATCC BAA-335 / MC58).